A 1165-amino-acid polypeptide reads, in one-letter code: MNSCIIVLRLLLSGPFVFAPAWSYNLDVRHVQNFSFPLAGRHFGYRVLQVGNGVVVGAPSEGNSMGNLYQCQPETGDCLPVTLSSNYTSKYLGMTLATDPTSDNLLACDPGLSRTCDQNIYLSGLCYLIHENLRGPVLQGHPGYQECIKGNVDLVFLFDGSMSLQQDEFEKIVDFMKDVMKKLSNSSYQFAAVQFSTYFRTEFTFLDYIRQKDPDALLAGVKHMRLLTNTFGAINYVAKEVFRPDLGARPDATKVLIIITDGEATDEHNIDAAKDIIRYIIGIGKNFKTKESQEALHQFASKPVEEFVKILDTFEKLKDLFTELQKKIYVIEGTSKQDLTSFNMELSSSGISADLSEGHGVVGAVGAKDWAGGFLDLKADLKSSTFVGNEPLTVESRAGYLGYTVTWLPSRGTMSLLATGAPRYQHVGRVLLFQQPKRGGPWSQIQEIDGIQIGSYFGGELCGVDVDRDGETELLLIAAPLYYGEQRGGRVFIYQKIQLEFQMVSELQGETGYPLGRFGAAIAALTDINGDELTDVAVGAPLEEQGAVYIFNGQQGGLSPRPSQRIEGTQMFSGIQWFGRSIHGVKDLGGDGLADVAVGAEGQVIVLSSRPVVDIITSVSFSPAEIPVHEVECSYSTSNQKKEGVNLTVCFQVKSLISTFQGHLVANLTYTLQLDGHRTRSRGLFPGGKHKLIGNTAVTPVKSCFVFWFHFPICIQDLISPINVSLSYSLWEEEGTPRDPRALDRDIPPILKPSPHLETKEIPFEKNCGEDKNCEADLKLAFSDMRSKILRLTPSASLSVRLTLRNTAEDAYWVQVTLSFPQGLSFRKVEILKPHSHVPVGCEELPEEAVVHSRALSCNVSSPIFGEDSMVDIQVMFNTLQKGSWGDFIELQANVSCNNEDSSLLEDNSATTSIPVMYPINVLTKDQENSTLYISFTPKSPKIHHVKHIYQVRIQPSNYDNMPPLEALVRVPRVHSEGLITHKWSIQMEPPVNCSPRNLESPSDEAESCSFGTEFRCPIDFRQEILVQVNGMVELRGTIKASSMLSLCSSLAISFNSSKHFHLYGRNASMAQVVMKVDLVYEKEMLYLYVLSGIGGLLLLFLIFIALYKVGFFKRNLKEKMEANVDASSEIPGEDAGQPELEKECKDPGCLEPLQKTDEDGSGGD.

Residues 1 to 23 form the signal peptide; that stretch reads MNSCIIVLRLLLSGPFVFAPAWS. Topologically, residues 24–1084 are extracellular; sequence YNLDVRHVQN…MKVDLVYEKE (1061 aa). FG-GAP repeat units follow at residues 29 to 80 and 81 to 138; these read RHVQ…DCLP and VTLS…GPVL. N33 is a glycosylation site (N-linked (GlcNAc...) asparagine). C71 and C78 are oxidised to a cystine. N-linked (GlcNAc...) asparagine glycosylation is present at N86. A disulfide bond links C108 and C126. A VWFA domain is found at 153–324; sequence DLVFLFDGSM…EKLKDLFTEL (172 aa). A glycan (N-linked (GlcNAc...) asparagine) is linked at N185. FG-GAP repeat units lie at residues 335-386, 387-442, 443-503, 504-560, and 564-624; these read SKQD…SSTF, VGNE…GGPW, SQIQ…EFQM, VSEL…GLSP, and QRIE…FSPA. Positions 465, 467, 469, 473, 527, 529, 531, 535, 587, 591, and 595 each coordinate Ca(2+). N-linked (GlcNAc...) asparagine glycosylation is found at N646, N667, and N723. C650 and C704 are oxidised to a cystine. Intrachain disulfides connect C768/C774 and C842/C858. N-linked (GlcNAc...) asparagine glycans are attached at residues N859, N894, and N929. 2 disulfides stabilise this stretch: C994-C1009 and C1017-C1048. N-linked (GlcNAc...) asparagine glycans are attached at residues N1056 and N1067. Residues 1085 to 1105 form a helical membrane-spanning segment; that stretch reads MLYLYVLSGIGGLLLLFLIFI. The Cytoplasmic portion of the chain corresponds to 1106–1165; the sequence is ALYKVGFFKRNLKEKMEANVDASSEIPGEDAGQPELEKECKDPGCLEPLQKTDEDGSGGD. The GFFKR motif signature appears at 1111-1115; sequence GFFKR. The tract at residues 1123–1165 is disordered; the sequence is ANVDASSEIPGEDAGQPELEKECKDPGCLEPLQKTDEDGSGGD. The segment covering 1140 to 1159 has biased composition (basic and acidic residues); it reads ELEKECKDPGCLEPLQKTDE.

Belongs to the integrin alpha chain family. In terms of assembly, heterodimer of an alpha and a beta subunit. The ITGAL alpha subunit associates with the ITGB2 beta subunit. Interacts with THBD. Interacts with CD226. Post-translationally, in resting T-cells, up to 40% of surface ITGAL is constitutively phosphorylated. Phosphorylation causes conformational changes needed for ligand binding and is necessary for the activation by some physiological agents.

It is found in the cell membrane. Integrin ITGAL/ITGB2 is a receptor for ICAM1, ICAM2, ICAM3 and ICAM4. Integrin ITGAL/ITGB2 is a receptor for F11R. Integrin ITGAL/ITGB2 is a receptor for the secreted form of ubiquitin-like protein ISG15; the interaction is mediated by ITGAL. Involved in a variety of immune phenomena including leukocyte-endothelial cell interaction, cytotoxic T-cell mediated killing, and antibody dependent killing by granulocytes and monocytes. Contributes to natural killer cell cytotoxicity. Involved in leukocyte adhesion and transmigration of leukocytes including T-cells and neutrophils. Acts as a platform at the immunological synapse to translate TCR engagement and density of the ITGAL ligand ICAM1 into graded adhesion. Required for generation of common lymphoid progenitor cells in bone marrow, indicating the role in lymphopoiesis. Integrin ITGAL/ITGB2 in association with ICAM3, contributes to apoptotic neutrophil phagocytosis by macrophages. This is Integrin alpha-L from Bos taurus (Bovine).